The primary structure comprises 228 residues: ATP-dependent dethiobiotin synthetase BioD (228 aa).

13-18 is an ATP binding site; that stretch reads DIGKTF. T17 lines the Mg(2+) pocket. K38 is a catalytic residue. Residue S42 participates in substrate binding. Residues D55, 116–119, 179–180, and 208–210 each bind ATP; these read EGSG, NK, and PKI. Residues D55 and E116 each coordinate Mg(2+).

It belongs to the dethiobiotin synthetase family. Homodimer. Mg(2+) is required as a cofactor.

The protein resides in the cytoplasm. It catalyses the reaction (7R,8S)-7,8-diammoniononanoate + CO2 + ATP = (4R,5S)-dethiobiotin + ADP + phosphate + 3 H(+). Its pathway is cofactor biosynthesis; biotin biosynthesis; biotin from 7,8-diaminononanoate: step 1/2. In terms of biological role, catalyzes a mechanistically unusual reaction, the ATP-dependent insertion of CO2 between the N7 and N8 nitrogen atoms of 7,8-diaminopelargonic acid (DAPA, also called 7,8-diammoniononanoate) to form a ureido ring. The polypeptide is ATP-dependent dethiobiotin synthetase BioD (Clostridium perfringens (strain 13 / Type A)).